A 162-amino-acid polypeptide reads, in one-letter code: NADH-quinone oxidoreductase subunit I (162 aa).

4Fe-4S ferredoxin-type domains are found at residues 52–82 (LRRY…IEAG) and 93–122 (TRYD…EGPN). Positions 62, 65, 68, 72, 102, 105, 108, and 112 each coordinate [4Fe-4S] cluster.

This sequence belongs to the complex I 23 kDa subunit family. In terms of assembly, NDH-1 is composed of 14 different subunits. Subunits NuoA, H, J, K, L, M, N constitute the membrane sector of the complex. [4Fe-4S] cluster serves as cofactor.

The protein localises to the cell inner membrane. It catalyses the reaction a quinone + NADH + 5 H(+)(in) = a quinol + NAD(+) + 4 H(+)(out). Functionally, NDH-1 shuttles electrons from NADH, via FMN and iron-sulfur (Fe-S) centers, to quinones in the respiratory chain. The immediate electron acceptor for the enzyme in this species is believed to be ubiquinone. Couples the redox reaction to proton translocation (for every two electrons transferred, four hydrogen ions are translocated across the cytoplasmic membrane), and thus conserves the redox energy in a proton gradient. This chain is NADH-quinone oxidoreductase subunit I, found in Xanthobacter autotrophicus (strain ATCC BAA-1158 / Py2).